A 35-amino-acid chain; its full sequence is uncharacterized protein (35 aa).

A helical membrane pass occupies residues 10 to 30 (LMITASFFAIFIIIVVSVLLL).

The protein localises to the membrane. This is an uncharacterized protein from Salmonella typhimurium (strain LT2 / SGSC1412 / ATCC 700720).